Here is a 1053-residue protein sequence, read N- to C-terminus: Phosphoenolpyruvate carboxylase (1053 aa).

Histidine 246 is an active-site residue. Basic and acidic residues predominate over residues 461–473; sequence RNTRLQQQQEKDP. A disordered region spans residues 461–480; sequence RNTRLQQQQEKDPTTPLPEY. Residue lysine 699 is part of the active site.

Belongs to the PEPCase type 1 family. Mg(2+) serves as cofactor.

The enzyme catalyses oxaloacetate + phosphate = phosphoenolpyruvate + hydrogencarbonate. Forms oxaloacetate, a four-carbon dicarboxylic acid source for the tricarboxylic acid cycle. This chain is Phosphoenolpyruvate carboxylase (ppc), found in Synechococcus sp. (strain ATCC 27144 / PCC 6301 / SAUG 1402/1) (Anacystis nidulans).